A 488-amino-acid chain; its full sequence is 1-deoxy-D-xylulose 5-phosphate reductoisomerase, apicoplastic (488 aa).

An apicoplast-targeting transit peptide spans 1–72 (MKKYIYIYFF…LCKKDLIDIG (72 aa)). Residues 86–89 (TGSI) and 115–117 (NKS) each bind NADP(+). Lysine 205 lines the 1-deoxy-D-xylulose 5-phosphate pocket. Glutamate 206 lines the NADP(+) pocket. Aspartate 231 provides a ligand contact to Mn(2+). Residues serine 232, glutamate 233, serine 270, and histidine 293 each contribute to the 1-deoxy-D-xylulose 5-phosphate site. Glutamate 233 contacts Mn(2+). Glycine 299 contributes to the NADP(+) binding site. 1-deoxy-D-xylulose 5-phosphate is bound by residues serine 306, asparagine 311, lysine 312, and glutamate 315. Glutamate 315 is a Mn(2+) binding site.

The protein belongs to the DXR family. Homodimer. Mg(2+) is required as a cofactor. It depends on Mn(2+) as a cofactor.

Its subcellular location is the plastid. The protein localises to the apicoplast. It catalyses the reaction 2-C-methyl-D-erythritol 4-phosphate + NADP(+) = 1-deoxy-D-xylulose 5-phosphate + NADPH + H(+). It participates in isoprenoid biosynthesis; isopentenyl diphosphate biosynthesis via DXP pathway; isopentenyl diphosphate from 1-deoxy-D-xylulose 5-phosphate: step 1/6. Its activity is regulated as follows. Inhibited by fosmidomycin and its derivatives. In terms of biological role, catalyzes the NADPH-dependent rearrangement and reduction of 1-deoxy-D-xylulose-5-phosphate (DXP) to 2-C-methyl-D-erythritol 4-phosphate (MEP). This Plasmodium falciparum (isolate 3D7) protein is 1-deoxy-D-xylulose 5-phosphate reductoisomerase, apicoplastic (DXR).